The following is a 230-amino-acid chain: CRP-like protein Clp (230 aa).

A nucleoside 3',5'-cyclic phosphate is bound at residue 18–139 (PSLTLDAGTI…APRILYAIGV (122 aa)). The region spanning 158–230 (LDVTDRIVRT…GKTVVLYGTR (73 aa)) is the HTH crp-type domain. Positions 190–209 (RQELARLVGCSREMAGRVLK) form a DNA-binding region, H-T-H motif.

In terms of assembly, homodimer.

The protein resides in the cytoplasm. Its activity is regulated as follows. Allosterically inhibited by cyclic di-GMP (c-di-GMP), which binds to Clp and abolishes its ability to bind its target gene promoter. Functionally, global transcriptional regulator that regulates virulence factors production by activating or repressing the expression of a large set of genes in diffusible signal factor (DSF) pathway. The chain is CRP-like protein Clp (clp) from Xanthomonas campestris pv. campestris (strain 8004).